The primary structure comprises 265 residues: Phosphate import ATP-binding protein PstB (265 aa).

The ABC transporter domain maps to 18–260; that stretch reads ISARDVQVFY…PEDPRTESYI (243 aa). 50–57 serves as a coordination point for ATP; the sequence is GPSGCGKS.

It belongs to the ABC transporter superfamily. Phosphate importer (TC 3.A.1.7) family. As to quaternary structure, the complex is composed of two ATP-binding proteins (PstB), two transmembrane proteins (PstC and PstA) and a solute-binding protein (PstS).

The protein localises to the cell inner membrane. It catalyses the reaction phosphate(out) + ATP + H2O = ADP + 2 phosphate(in) + H(+). Its function is as follows. Part of the ABC transporter complex PstSACB involved in phosphate import. Responsible for energy coupling to the transport system. This chain is Phosphate import ATP-binding protein PstB, found in Roseobacter denitrificans (strain ATCC 33942 / OCh 114) (Erythrobacter sp. (strain OCh 114)).